A 53-amino-acid chain; its full sequence is UPF0391 membrane protein Bmul_5473/BMULJ_06024 (53 aa).

2 helical membrane passes run 5–25 and 30–50; these read ALIFFVIAIIAAVFGFGGIAA and IAKILFYIFVVIFLVTLLLGV.

This sequence belongs to the UPF0391 family.

Its subcellular location is the cell membrane. This chain is UPF0391 membrane protein Bmul_5473/BMULJ_06024, found in Burkholderia multivorans (strain ATCC 17616 / 249).